Consider the following 258-residue polypeptide: Synapse differentiation-inducing gene protein 1 (258 aa).

Over 1 to 181 (MDGIIEQKSM…NFLMMPPRDH (181 aa)) the chain is Cytoplasmic. Phosphoserine is present on S137. Residues 182-202 (LGLSVFSMLCCFWPLGIAAFY) traverse the membrane as a helical segment. Residues 203–228 (LSHETNKAVAKGDLHQASTSSRRALF) are Extracellular-facing. The segment at residues 229–249 (LAVLSITIGTGVYVGVAVALI) is an intramembrane region (helical). Residues 250–258 (AYLSKNNHL) lie on the Extracellular side of the membrane.

This sequence belongs to the CD225/Dispanin family. In terms of assembly, homodimer. Interacts with GRIA1 and GRIA2.

The protein resides in the cell membrane. It is found in the early endosome membrane. The protein localises to the postsynaptic density membrane. Its subcellular location is the synapse. It localises to the cell projection. The protein resides in the dendrite. It is found in the dendritic spine. May regulate AMPA receptor content at nascent synapses, and have a role in postsynaptic development and maturation. This Macaca fascicularis (Crab-eating macaque) protein is Synapse differentiation-inducing gene protein 1 (SYNDIG1).